We begin with the raw amino-acid sequence, 115 residues long: U3-lycotoxin-Ls1s (115 aa).

A signal peptide spans 1–20; it reads MKFVLLFGVFLLTLFSYSSS. Residues 21–44 constitute a propeptide that is removed on maturation; the sequence is EMLDDFDQADEDELLSLIEKEEAR. Cystine bridges form between Cys-48-Cys-63, Cys-55-Cys-72, Cys-62-Cys-87, and Cys-74-Cys-85.

Belongs to the neurotoxin 19 (CSTX) family. 01 subfamily. In terms of tissue distribution, expressed by the venom gland.

It is found in the secreted. The polypeptide is U3-lycotoxin-Ls1s (Lycosa singoriensis (Wolf spider)).